A 493-amino-acid chain; its full sequence is Cobyric acid synthase (493 aa).

Positions 252 to 440 (PVKIVVLRLR…IHGIFESDSL (189 aa)) constitute a GATase cobBQ-type domain. Catalysis depends on Cys333, which acts as the Nucleophile. The active site involves His432.

Belongs to the CobB/CobQ family. CobQ subfamily.

Its pathway is cofactor biosynthesis; adenosylcobalamin biosynthesis. Its function is as follows. Catalyzes amidations at positions B, D, E, and G on adenosylcobyrinic A,C-diamide. NH(2) groups are provided by glutamine, and one molecule of ATP is hydrogenolyzed for each amidation. This Thermodesulfovibrio yellowstonii (strain ATCC 51303 / DSM 11347 / YP87) protein is Cobyric acid synthase.